We begin with the raw amino-acid sequence, 174 residues long: Mediator of RNA polymerase II transcription subunit 30 (174 aa).

The stretch at 113 to 166 (VEDDSSKLEDRMANQLRAASEERREVLEVNKKLKQKNQQLKMIMDQLRNLIWEI) forms a coiled coil.

Belongs to the Mediator complex subunit 30 family. As to quaternary structure, component of the Mediator complex.

It is found in the nucleus. In terms of biological role, component of the Mediator complex, a coactivator involved in the regulated transcription of nearly all RNA polymerase II-dependent genes. Mediator functions as a bridge to convey information from gene-specific regulatory proteins to the basal RNA polymerase II transcription machinery. Mediator is recruited to promoters by direct interactions with regulatory proteins and serves as a scaffold for the assembly of a functional preinitiation complex with RNA polymerase II and the general transcription factors. This Danio rerio (Zebrafish) protein is Mediator of RNA polymerase II transcription subunit 30 (med30).